The primary structure comprises 154 residues: MYYYLITLAVIALDQLTKWIVVQNMEIGQKIEVIPGFLYWTSYRNDGAAWSILEGHMWFFYLITVIVIGIIIYIMQKYAKGKRLFSISLAFILGGAIGNFIDRILHQEVVDFVQTVWGNYYFPIFNVADAALSVGVVLMLVYVFVDDRKTKGIK.

2 helical membrane-spanning segments follow: residues 55-75 (GHMW…IYIM) and 84-104 (LFSI…IDRI). Catalysis depends on residues aspartate 111 and aspartate 129. The helical transmembrane segment at 124–144 (IFNVADAALSVGVVLMLVYVF) threads the bilayer.

This sequence belongs to the peptidase A8 family.

The protein localises to the cell membrane. It carries out the reaction Release of signal peptides from bacterial membrane prolipoproteins. Hydrolyzes -Xaa-Yaa-Zaa-|-(S,diacylglyceryl)Cys-, in which Xaa is hydrophobic (preferably Leu), and Yaa (Ala or Ser) and Zaa (Gly or Ala) have small, neutral side chains.. It participates in protein modification; lipoprotein biosynthesis (signal peptide cleavage). This protein specifically catalyzes the removal of signal peptides from prolipoproteins. This Listeria innocua serovar 6a (strain ATCC BAA-680 / CLIP 11262) protein is Lipoprotein signal peptidase.